Consider the following 226-residue polypeptide: ATP synthase F(0) complex subunit a (226 aa).

The next 6 membrane-spanning stretches (helical) occupy residues 6 to 26 (FATF…IMLF), 68 to 88 (WALM…LGLL), 97 to 117 (QLSM…LMGF), 138 to 158 (VPML…ALAV), 164 to 184 (ITAG…LCSI), and 193 to 213 (FIIL…QAYV).

Belongs to the ATPase A chain family. Component of the ATP synthase complex composed at least of ATP5F1A/subunit alpha, ATP5F1B/subunit beta, ATP5MC1/subunit c (homooctomer), MT-ATP6/subunit a, MT-ATP8/subunit 8, ATP5ME/subunit e, ATP5MF/subunit f, ATP5MG/subunit g, ATP5MK/subunit k, ATP5MJ/subunit j, ATP5F1C/subunit gamma, ATP5F1D/subunit delta, ATP5F1E/subunit epsilon, ATP5PF/subunit F6, ATP5PB/subunit b, ATP5PD/subunit d, ATP5PO/subunit OSCP. ATP synthase complex consists of a soluble F(1) head domain (subunits alpha(3) and beta(3)) - the catalytic core - and a membrane F(0) domain - the membrane proton channel (subunits c, a, 8, e, f, g, k and j). These two domains are linked by a central stalk (subunits gamma, delta, and epsilon) rotating inside the F1 region and a stationary peripheral stalk (subunits F6, b, d, and OSCP). Interacts with DNAJC30; interaction is direct.

It is found in the mitochondrion inner membrane. The catalysed reaction is H(+)(in) = H(+)(out). Subunit a, of the mitochondrial membrane ATP synthase complex (F(1)F(0) ATP synthase or Complex V) that produces ATP from ADP in the presence of a proton gradient across the membrane which is generated by electron transport complexes of the respiratory chain. ATP synthase complex consist of a soluble F(1) head domain - the catalytic core - and a membrane F(1) domain - the membrane proton channel. These two domains are linked by a central stalk rotating inside the F(1) region and a stationary peripheral stalk. During catalysis, ATP synthesis in the catalytic domain of F(1) is coupled via a rotary mechanism of the central stalk subunits to proton translocation. With the subunit c (ATP5MC1), forms the proton-conducting channel in the F(0) domain, that contains two crucial half-channels (inlet and outlet) that facilitate proton movement from the mitochondrial intermembrane space (IMS) into the matrix. Protons are taken up via the inlet half-channel and released through the outlet half-channel, following a Grotthuss mechanism. This is ATP synthase F(0) complex subunit a from Osphranter robustus (Wallaroo).